The chain runs to 284 residues: uncharacterized protein (284 aa).

The first 21 residues, 1–21 (MKTTMLMLVLLVCSYIHYVCA), serve as a signal peptide directing secretion. The next 3 membrane-spanning stretches (helical) occupy residues 88–108 (AGPF…FLWA), 144–164 (ALGV…LGVW), and 212–232 (VFTT…SPTY).

It is found in the membrane. This is an uncharacterized protein from Schizosaccharomyces pombe (strain 972 / ATCC 24843) (Fission yeast).